The primary structure comprises 392 residues: Heat-inducible transcription repressor HrcA (392 aa).

This sequence belongs to the HrcA family.

In terms of biological role, negative regulator of class I heat shock genes (grpE-dnaK-dnaJ and groELS operons). Prevents heat-shock induction of these operons. The sequence is that of Heat-inducible transcription repressor HrcA from Chlamydia muridarum (strain MoPn / Nigg).